Consider the following 363-residue polypeptide: tRNA(Met) cytidine acetate ligase (363 aa).

ATP contacts are provided by residues isoleucine 7–leucine 20, glycine 96, asparagine 152, and arginine 175.

The protein belongs to the TmcAL family.

It is found in the cytoplasm. The enzyme catalyses cytidine(34) in elongator tRNA(Met) + acetate + ATP = N(4)-acetylcytidine(34) in elongator tRNA(Met) + AMP + diphosphate. Functionally, catalyzes the formation of N(4)-acetylcytidine (ac(4)C) at the wobble position of elongator tRNA(Met), using acetate and ATP as substrates. First activates an acetate ion to form acetyladenylate (Ac-AMP) and then transfers the acetyl group to tRNA to form ac(4)C34. The protein is tRNA(Met) cytidine acetate ligase of Streptococcus thermophilus (strain ATCC BAA-250 / LMG 18311).